Consider the following 185-residue polypeptide: Crossover junction endodeoxyribonuclease RuvC (185 aa).

Catalysis depends on residues D7, E68, and D141. 3 residues coordinate Mg(2+): D7, E68, and D141.

The protein belongs to the RuvC family. As to quaternary structure, homodimer which binds Holliday junction (HJ) DNA. The HJ becomes 2-fold symmetrical on binding to RuvC with unstacked arms; it has a different conformation from HJ DNA in complex with RuvA. In the full resolvosome a probable DNA-RuvA(4)-RuvB(12)-RuvC(2) complex forms which resolves the HJ. The cofactor is Mg(2+).

It is found in the cytoplasm. It catalyses the reaction Endonucleolytic cleavage at a junction such as a reciprocal single-stranded crossover between two homologous DNA duplexes (Holliday junction).. Functionally, the RuvA-RuvB-RuvC complex processes Holliday junction (HJ) DNA during genetic recombination and DNA repair. Endonuclease that resolves HJ intermediates. Cleaves cruciform DNA by making single-stranded nicks across the HJ at symmetrical positions within the homologous arms, yielding a 5'-phosphate and a 3'-hydroxyl group; requires a central core of homology in the junction. The consensus cleavage sequence is 5'-(A/T)TT(C/G)-3'. Cleavage occurs on the 3'-side of the TT dinucleotide at the point of strand exchange. HJ branch migration catalyzed by RuvA-RuvB allows RuvC to scan DNA until it finds its consensus sequence, where it cleaves and resolves the cruciform DNA. This chain is Crossover junction endodeoxyribonuclease RuvC, found in Mycobacterium sp. (strain MCS).